The primary structure comprises 345 residues: MTRRINDTFLRACRGEKTAYVPVWYMRQAGRSQPEYRALKEKYSLFEITHQPELCAYVTRLPVEQYGVDAAILYKDIMTPLPAIGVDVEIRGGVGPVIANPIRSLHDVERLGEIDPEHDVPYVLETIRLLVNEQLDVPLIGFAGAPFTLASYMIEGGPSKNYHKTKAFMYAEPKAWFALMDKLAEMTIRYVKAQIQAGASAVQIFDSWVGAVNADDYRTFIKPAMARIFAALREEGAPLIMFGVGASHLAHEWNDLPLDVIGLDWRLSIREARRRGITKAIQGNLDPAVLLAPWDVIEERVKRILDEGMEQPGYIFNLGHGIFPDVQPATLKRLTAFIHDYTSTK.

Substrate-binding positions include 27–31 (RQAGR), Phe46, Asp76, Tyr152, Ser207, and His320.

It belongs to the uroporphyrinogen decarboxylase family. As to quaternary structure, homodimer.

It is found in the cytoplasm. It carries out the reaction uroporphyrinogen III + 4 H(+) = coproporphyrinogen III + 4 CO2. It participates in porphyrin-containing compound metabolism; protoporphyrin-IX biosynthesis; coproporphyrinogen-III from 5-aminolevulinate: step 4/4. Its function is as follows. Catalyzes the decarboxylation of four acetate groups of uroporphyrinogen-III to yield coproporphyrinogen-III. The chain is Uroporphyrinogen decarboxylase from Geobacillus thermodenitrificans (strain NG80-2).